A 414-amino-acid chain; its full sequence is Snake venom metalloproteinase atrolysin-D (414 aa).

The signal sequence occupies residues M1–S20. The propeptide occupies I21–D190. A Pyrrolidone carboxylic acid modification is found at Q191. The Peptidase M12B domain occupies R197 to P393. Ca(2+) contacts are provided by E200 and D284. Intrachain disulfides connect C308/C388 and C348/C355. H333 lines the Zn(2+) pocket. E334 is a catalytic residue. Residues H337 and H343 each coordinate Zn(2+). 2 residues coordinate Ca(2+): C388 and N391. Residues L394–E414 constitute a propeptide that is removed on maturation.

Belongs to the venom metalloproteinase (M12B) family. P-I subfamily. As to quaternary structure, monomer. Zn(2+) serves as cofactor. In terms of processing, the N-terminus is blocked. As to expression, expressed by the venom gland.

The protein resides in the secreted. It carries out the reaction Cleavage of 5-His-|-Leu-6, 10-His-|-Leu-11, 14-Ala-|-Leu-15, 16-Tyr-|-Leu-17 and 23-Gly-|-Phe-24 of insulin B chain. With small molecule substrates prefers hydrophobic residue at P2' and small residue such as Ala, Gly at P1.. Functionally, snake venom zinc metalloproteinase that causes hemorrhage by provoking the degradation of the sub-endothelial matrix proteins (fibronectin, laminin, type IV collagen, nidogen, and gelatins). The protein is Snake venom metalloproteinase atrolysin-D of Crotalus atrox (Western diamondback rattlesnake).